The following is a 380-amino-acid chain: Chaperone protein DnaJ (380 aa).

The 65-residue stretch at 5 to 69 (DYYEILGVSK…QKRAHYDQFG (65 aa)) folds into the J domain. The segment at 135-217 (GKETDIEIPR…CGGTGRVKRR (83 aa)) adopts a CR-type zinc-finger fold. 8 residues coordinate Zn(2+): cysteine 148, cysteine 151, cysteine 165, cysteine 168, cysteine 191, cysteine 194, cysteine 205, and cysteine 208. CXXCXGXG motif repeat units follow at residues 148–155 (CNTCHGTG), 165–172 (CSYCHGTG), 191–198 (CPYCGGTG), and 205–212 (CTTCGGTG).

Belongs to the DnaJ family. Homodimer. The cofactor is Zn(2+).

It localises to the cytoplasm. Its function is as follows. Participates actively in the response to hyperosmotic and heat shock by preventing the aggregation of stress-denatured proteins and by disaggregating proteins, also in an autonomous, DnaK-independent fashion. Unfolded proteins bind initially to DnaJ; upon interaction with the DnaJ-bound protein, DnaK hydrolyzes its bound ATP, resulting in the formation of a stable complex. GrpE releases ADP from DnaK; ATP binding to DnaK triggers the release of the substrate protein, thus completing the reaction cycle. Several rounds of ATP-dependent interactions between DnaJ, DnaK and GrpE are required for fully efficient folding. Also involved, together with DnaK and GrpE, in the DNA replication of plasmids through activation of initiation proteins. This chain is Chaperone protein DnaJ, found in Parageobacillus thermoglucosidasius (Geobacillus thermoglucosidasius).